The primary structure comprises 158 residues: Transcription factor HY5 (158 aa).

Positions 1–25 are enriched in low complexity; the sequence is MQEQATSSIAASSLPSSSERSSSSA. The tract at residues 1 to 105 is disordered; it reads MQEQATSSIA…NRVSAQQARE (105 aa). The segment covering 26-44 has biased composition (basic and acidic residues); it reads LHHELKEGMESDDEIRRVP. The interval 35-46 is interaction with COP1; that stretch reads ESDDEIRRVPEM. Positions 47–58 are enriched in low complexity; it reads GGEATGTTSASG. The 64-residue stretch at 86-149 folds into the bZIP domain; the sequence is ENKRLKRLLR…QMLRHILKNT (64 aa). Residues 88 to 108 are basic motif; the sequence is KRLKRLLRNRVSAQQARERKK. Residues 114-142 form a leucine-zipper region; the sequence is LEARVKELETKNAELEERLSTLQNENQML.

The protein belongs to the bZIP family. As to quaternary structure, interacts with COP1. Post-translationally, ubiquitinated by COP1. Ubiquitination takes place in darkness and leads to its subsequent degradation, thereby preventing to activate photomorphogenesis signals.

The protein localises to the nucleus. Its function is as follows. Transcription factor that promotes photomorphogenesis in the light and positively regulates fruit pigmentation and fruit nutritional quality. Probably acts downstream of the light receptor network and directly affects transcription of light-induced genes. This is Transcription factor HY5 (HY5) from Solanum lycopersicum (Tomato).